We begin with the raw amino-acid sequence, 142 residues long: Large ribosomal subunit protein uL11 (142 aa).

This sequence belongs to the universal ribosomal protein uL11 family. In terms of assembly, part of the ribosomal stalk of the 50S ribosomal subunit. Interacts with L10 and the large rRNA to form the base of the stalk. L10 forms an elongated spine to which L12 dimers bind in a sequential fashion forming a multimeric L10(L12)X complex. Post-translationally, one or more lysine residues are methylated.

In terms of biological role, forms part of the ribosomal stalk which helps the ribosome interact with GTP-bound translation factors. In Proteus mirabilis (strain HI4320), this protein is Large ribosomal subunit protein uL11.